Here is a 317-residue protein sequence, read N- to C-terminus: Aspartate carbamoyltransferase catalytic subunit (317 aa).

Residues Arg64 and Thr65 each contribute to the carbamoyl phosphate site. Lys92 contributes to the L-aspartate binding site. Residues Arg114, His142, and Gln145 each contribute to the carbamoyl phosphate site. L-aspartate-binding residues include Arg176 and Arg230. The carbamoyl phosphate site is built by Gly271 and Pro272.

This sequence belongs to the aspartate/ornithine carbamoyltransferase superfamily. ATCase family. As to quaternary structure, heterododecamer (2C3:3R2) of six catalytic PyrB chains organized as two trimers (C3), and six regulatory PyrI chains organized as three dimers (R2).

The catalysed reaction is carbamoyl phosphate + L-aspartate = N-carbamoyl-L-aspartate + phosphate + H(+). Its pathway is pyrimidine metabolism; UMP biosynthesis via de novo pathway; (S)-dihydroorotate from bicarbonate: step 2/3. Functionally, catalyzes the condensation of carbamoyl phosphate and aspartate to form carbamoyl aspartate and inorganic phosphate, the committed step in the de novo pyrimidine nucleotide biosynthesis pathway. This chain is Aspartate carbamoyltransferase catalytic subunit, found in Nitratidesulfovibrio vulgaris (strain ATCC 29579 / DSM 644 / CCUG 34227 / NCIMB 8303 / VKM B-1760 / Hildenborough) (Desulfovibrio vulgaris).